The sequence spans 88 residues: uncharacterized protein (88 aa).

This is an uncharacterized protein from Escherichia coli (strain K12).